A 688-amino-acid chain; its full sequence is Elongation factor G (688 aa).

A tr-type G domain is found at 8–282 (EKTRNIGIMA…AIIDYLPSPM (275 aa)). Residues 17–24 (AHIDAGKT), 81–85 (DTPGH), and 135–138 (NKMD) each bind GTP.

It belongs to the TRAFAC class translation factor GTPase superfamily. Classic translation factor GTPase family. EF-G/EF-2 subfamily.

Its subcellular location is the cytoplasm. Its function is as follows. Catalyzes the GTP-dependent ribosomal translocation step during translation elongation. During this step, the ribosome changes from the pre-translocational (PRE) to the post-translocational (POST) state as the newly formed A-site-bound peptidyl-tRNA and P-site-bound deacylated tRNA move to the P and E sites, respectively. Catalyzes the coordinated movement of the two tRNA molecules, the mRNA and conformational changes in the ribosome. This chain is Elongation factor G (fusA), found in Apple proliferation phytoplasma.